The sequence spans 205 residues: MSGLIGKKIGMTSIFDENGKNIPCTVIEAGPCVVTQVRTNEVDGYEALQLGFDDKNEKHSTKAALGHFKKAGTVAKKKVVEFQDFATEQKLGDLIDVSIFEEGEFVDVQGVSKGKGFQGVVKRHGFGGVGQATHGQHNRLRAPGSVGASSYPSRVFKGMRMAGRMGGDNVKVQNLRVLKVVAEKNLLVVKGCIPGHKNSYVIIQK.

The protein belongs to the universal ribosomal protein uL3 family. Part of the 50S ribosomal subunit. Forms a cluster with proteins L14 and L19.

Functionally, one of the primary rRNA binding proteins, it binds directly near the 3'-end of the 23S rRNA, where it nucleates assembly of the 50S subunit. This chain is Large ribosomal subunit protein uL3, found in Flavobacterium johnsoniae (strain ATCC 17061 / DSM 2064 / JCM 8514 / BCRC 14874 / CCUG 350202 / NBRC 14942 / NCIMB 11054 / UW101) (Cytophaga johnsonae).